Here is a 163-residue protein sequence, read N- to C-terminus: Cyanate hydratase (163 aa).

Catalysis depends on residues Arg103, Glu106, and Ser129.

The protein belongs to the cyanase family.

The enzyme catalyses cyanate + hydrogencarbonate + 3 H(+) = NH4(+) + 2 CO2. Its function is as follows. Catalyzes the reaction of cyanate with bicarbonate to produce ammonia and carbon dioxide. The protein is Cyanate hydratase of Paracoccidioides brasiliensis (strain Pb18).